Consider the following 718-residue polypeptide: Myeloperoxidase (718 aa).

An N-terminal signal peptide occupies residues 1–15 (MKLLLALAGLLAPLA). Positions 16 to 138 (MLQTSNGATP…SSGCAYQDVR (123 aa)) are excised as a propeptide. An N-linked (GlcNAc...) asparagine glycan is attached at Asn-113. Cys-141 and Cys-154 are joined by a disulfide. Asp-234 lines the heme b pocket. Catalysis depends on His-235, which acts as the Proton acceptor. A Ca(2+)-binding site is contributed by Asp-236. 2 disulfides stabilise this stretch: Cys-255-Cys-265 and Cys-259-Cys-283. A Cysteine sulfenic acid (-SOH) modification is found at Cys-290. An N-linked (GlcNAc...) asparagine glycan is attached at Asn-297. Residues Thr-308, Phe-310, Asp-312, and Ser-314 each contribute to the Ca(2+) site. 2 N-linked (GlcNAc...) asparagine glycosylation sites follow: Asn-329 and Asn-365. Cys-361 and Cys-372 are joined by a disulfide. Residues Glu-382 and Met-383 each contribute to the heme b site. Asn-457 is a glycosylation site (N-linked (GlcNAc...) asparagine). His-476 is a heme b binding site. 2 disulfides stabilise this stretch: Cys-580/Cys-637 and Cys-678/Cys-704. Asn-711 carries an N-linked (GlcNAc...) asparagine glycan.

Belongs to the peroxidase family. XPO subfamily. Homodimer; disulfide-linked. Each monomer consists of a light and a heavy chain. Found in a complex with CP and LTF; interacts directly with CP, which protects CP antioxidant properties by MPO. The cofactor is Ca(2+). Requires heme b as cofactor.

The protein localises to the lysosome. The catalysed reaction is chloride + H2O2 + H(+) = hypochlorous acid + H2O. Part of the host defense system of polymorphonuclear leukocytes. It is responsible for microbicidal activity against a wide range of organisms. In the stimulated PMN, MPO catalyzes the production of hypohalous acids, primarily hypochlorous acid in physiologic situations, and other toxic intermediates that greatly enhance PMN microbicidal activity. Mediates the proteolytic cleavage of alpha-1-microglobulin to form t-alpha-1-microglobulin, which potently inhibits oxidation of low density lipoprotein particles and limits vascular damage. The chain is Myeloperoxidase (Mpo) from Mus musculus (Mouse).